The sequence spans 609 residues: Putative transcriptional regulatory protein y4pA (609 aa).

Residues 313–533 (IVGRSPSIQQ…LRSVLETAAI (221 aa)) form the Sigma-54 factor interaction domain. 395 to 404 (HPKATLLIES) contributes to the ATP binding site. The H-T-H motif DNA-binding region spans 578 to 597 (RGEAARYLGISRKTLYNKMR).

In terms of biological role, probable transcriptional regulator that acts in conjunction with sigma-54. The sequence is that of Putative transcriptional regulatory protein y4pA from Sinorhizobium fredii (strain NBRC 101917 / NGR234).